The sequence spans 506 residues: Cytochrome P450 6a2 (506 aa).

C451 contributes to the heme binding site.

The protein belongs to the cytochrome P450 family. Heme serves as cofactor.

It localises to the endoplasmic reticulum membrane. Its subcellular location is the microsome membrane. In terms of biological role, is involved in the breakdown of synthetic insecticides and may be involved in the metabolism of insect hormones. This Drosophila melanogaster (Fruit fly) protein is Cytochrome P450 6a2 (Cyp6a2).